A 402-amino-acid polypeptide reads, in one-letter code: E3 ubiquitin-protein ligase MARCHF11 (402 aa).

Residues 1–11 (MSFEGGHGGSR) show a composition bias toward gly residues. Residues 1 to 161 (MSFEGGHGGS…SGGGDQRAGH (161 aa)) form a disordered region. A compositionally biased stretch (pro residues) spans 21–56 (EPPPQPPPPPPPTPPPGEPAPVPAAPRYLPPLPASP). Positions 111–124 (EAAAAKGGPGESEA) are enriched in low complexity. Residues 162–222 (QHQHHQPICK…ELCCYRYHVI (61 aa)) form an RING-CH-type zinc finger. Zn(2+) is bound by residues C170, C173, C186, C188, H196, C199, C212, and C215. 2 helical membrane-spanning segments follow: residues 245 to 265 (MIAVILGSLFLIASVTWLLWS) and 278 to 298 (ILFQICYGMYGFMDLVCIGLI). The short motif at 371–374 (YVLL) is the YXXL motif element. The short motif at 399–402 (VTSV) is the PDZ-binding element.

Interacts (YXXL motif) with AP1M1. Interacts (via PDZ-binding motif) with LIN7A. Interacts with unidentified fucose glycoproteins.

Its subcellular location is the cytoplasmic vesicle membrane. It carries out the reaction S-ubiquitinyl-[E2 ubiquitin-conjugating enzyme]-L-cysteine + [acceptor protein]-L-lysine = [E2 ubiquitin-conjugating enzyme]-L-cysteine + N(6)-ubiquitinyl-[acceptor protein]-L-lysine.. The protein operates within protein modification; protein ubiquitination. In terms of biological role, E3 ubiquitin-protein ligase that mediates polyubiquitination of CD4. E3 ubiquitin ligases accept ubiquitin from an E2 ubiquitin-conjugating enzyme in the form of a thioester and then directly transfer the ubiquitin to targeted substrates. May play a role in ubuquitin-dependent protein sorting in developmenting spermatids. This Homo sapiens (Human) protein is E3 ubiquitin-protein ligase MARCHF11.